The following is a 128-amino-acid chain: Protein 2B* (128 aa).

Disordered stretches follow at residues 1 to 27 (PFMF…NPTA) and 92 to 128 (RDDN…RNSS). Residues 18-27 (SVINGSNPTA) show a composition bias toward polar residues. The segment covering 111–128 (IDGRRDYKPDKSVRRNSS) has biased composition (basic and acidic residues).

It belongs to the encephalomyocarditis virus protein 2B* family.

The chain is Protein 2B* from Aotus trivirgatus (Three-striped night monkey).